Reading from the N-terminus, the 357-residue chain is sn-glycerol-3-phosphate import ATP-binding protein UgpC (357 aa).

The ABC transporter domain occupies 4–235 (LKLQAVTKSY…PASLFVASFI (232 aa)). Residue 37–44 (GPSGCGKS) participates in ATP binding.

Belongs to the ABC transporter superfamily. sn-glycerol-3-phosphate importer (TC 3.A.1.1.3) family. As to quaternary structure, the complex is composed of two ATP-binding proteins (UgpC), two transmembrane proteins (UgpA and UgpE) and a solute-binding protein (UgpB).

Its subcellular location is the cell inner membrane. It catalyses the reaction sn-glycerol 3-phosphate(out) + ATP + H2O = sn-glycerol 3-phosphate(in) + ADP + phosphate + H(+). Its function is as follows. Part of the ABC transporter complex UgpBAEC involved in sn-glycerol-3-phosphate (G3P) import. Responsible for energy coupling to the transport system. In Yersinia pseudotuberculosis serotype I (strain IP32953), this protein is sn-glycerol-3-phosphate import ATP-binding protein UgpC.